The chain runs to 127 residues: Glycine cleavage system H protein (127 aa).

Positions 22 to 104 constitute a Lipoyl-binding domain; sequence NVRIGITDYA…YDKAWMIVVK (83 aa). K63 is subject to N6-lipoyllysine.

Belongs to the GcvH family. The glycine cleavage system is composed of four proteins: P, T, L and H. Requires (R)-lipoate as cofactor.

The glycine cleavage system catalyzes the degradation of glycine. The H protein shuttles the methylamine group of glycine from the P protein to the T protein. In terms of biological role, is also involved in protein lipoylation via its role as an octanoyl/lipoyl carrier protein intermediate. The polypeptide is Glycine cleavage system H protein (Geobacillus kaustophilus (strain HTA426)).